The primary structure comprises 335 residues: Beta-ketoacyl-[acyl-carrier-protein] synthase III 1 (335 aa).

Residues C116 and H256 contribute to the active site. Residues 257–261 (QANQR) are ACP-binding. The active site involves N286.

This sequence belongs to the thiolase-like superfamily. FabH family. Homodimer.

It is found in the cytoplasm. The catalysed reaction is malonyl-[ACP] + acetyl-CoA + H(+) = 3-oxobutanoyl-[ACP] + CO2 + CoA. It functions in the pathway lipid metabolism; fatty acid biosynthesis. Functionally, catalyzes the condensation reaction of fatty acid synthesis by the addition to an acyl acceptor of two carbons from malonyl-ACP. Catalyzes the first condensation reaction which initiates fatty acid synthesis and may therefore play a role in governing the total rate of fatty acid production. Possesses both acetoacetyl-ACP synthase and acetyl transacylase activities. Its substrate specificity determines the biosynthesis of branched-chain and/or straight-chain of fatty acids. This Bacteroides thetaiotaomicron (strain ATCC 29148 / DSM 2079 / JCM 5827 / CCUG 10774 / NCTC 10582 / VPI-5482 / E50) protein is Beta-ketoacyl-[acyl-carrier-protein] synthase III 1.